The primary structure comprises 942 residues: Inter-alpha-trypsin inhibitor heavy chain H5 (942 aa).

Positions 1-16 (MLLLLGLCLGLSLCVG) are cleaved as a signal peptide. A VIT domain is found at 35 to 161 (VPRQVRLLQR…KAAFFLSYEE (127 aa)). 2 N-linked (GlcNAc...) asparagine glycosylation sites follow: Asn-97 and Asn-127. 2 disordered regions span residues 116 to 136 (KKSGDRVKEKRNKTTEENGEK) and 208 to 227 (SRQRGSGRGEDDSGPPPSTV). 3 N-linked (GlcNAc...) asparagine glycosylation sites follow: Asn-231, Asn-421, and Asn-508. Residues 295–478 (NVVFVLDSSA…SQLIGFYDEI (184 aa)) enclose the VWFA domain. The disordered stretch occupies residues 550–571 (QKAGKDVTGSPRPGGDGEGDTN). N-linked (GlcNAc...) asparagine glycans are attached at residues Asn-776, Asn-795, and Asn-862.

The protein belongs to the ITIH family. In terms of tissue distribution, abundantly expressed in placenta. Less abundant expression in mammary gland and ovary. Expression is barely detectable levels in all other tissues tested.

It is found in the secreted. In terms of biological role, may act as a tumor suppressor. This is Inter-alpha-trypsin inhibitor heavy chain H5 (ITIH5) from Homo sapiens (Human).